The following is a 177-amino-acid chain: Large ribosomal subunit protein uL6 (177 aa).

It belongs to the universal ribosomal protein uL6 family. In terms of assembly, part of the 50S ribosomal subunit.

Functionally, this protein binds to the 23S rRNA, and is important in its secondary structure. It is located near the subunit interface in the base of the L7/L12 stalk, and near the tRNA binding site of the peptidyltransferase center. This is Large ribosomal subunit protein uL6 from Rhizobium johnstonii (strain DSM 114642 / LMG 32736 / 3841) (Rhizobium leguminosarum bv. viciae).